The sequence spans 479 residues: Something about silencing protein 10 (479 aa).

Over residues 1–10 (MVGRSRRRGA) the composition is skewed to basic residues. Disordered regions lie at residues 1–45 (MVGR…SYYQ) and 62–166 (KGWN…EEAQ). Arg8 carries the omega-N-methylarginine modification. Low complexity predominate over residues 11-21 (AKWAAVRAKAG). Position 37 is a phosphoserine (Ser37). Over residues 69–111 (SGDEEDGEEEEEEVLALDMDDEDDEDGGNAGEEEEEENADDDG) the composition is skewed to acidic residues. An N6-acetyllysine; alternate modification is found at Lys144. A Glycyl lysine isopeptide (Lys-Gly) (interchain with G-Cter in SUMO2); alternate cross-link involves residue Lys144. Position 150 is a phosphoserine (Ser150). Acidic residues predominate over residues 153 to 165 (EAEEEEREEEEEA). At Thr362 the chain carries Phosphothreonine. Phosphoserine is present on residues Ser365 and Ser368. Citrulline is present on Arg385. The tract at residues 419-466 (RGLTPRRKKIDRNPRVKHREKFRRAKIRRRGQVREVRKEEQRYSGELS) is disordered. Residues 422 to 449 (TPRRKKIDRNPRVKHREKFRRAKIRRRG) show a composition bias toward basic residues. Positions 450-461 (QVREVRKEEQRY) are enriched in basic and acidic residues.

Belongs to the SAS10 family. As to quaternary structure, part of the small subunit (SSU) processome, composed of more than 70 proteins and the RNA chaperone small nucleolar RNA (snoRNA) U3. Citrullinated by PADI4.

The protein localises to the nucleus. It is found in the nucleolus. Essential for gene silencing: has a role in the structure of silenced chromatin. Plays a role in the developing brain. Part of the small subunit (SSU) processome, first precursor of the small eukaryotic ribosomal subunit. During the assembly of the SSU processome in the nucleolus, many ribosome biogenesis factors, an RNA chaperone and ribosomal proteins associate with the nascent pre-rRNA and work in concert to generate RNA folding, modifications, rearrangements and cleavage as well as targeted degradation of pre-ribosomal RNA by the RNA exosome. This chain is Something about silencing protein 10, found in Homo sapiens (Human).